Reading from the N-terminus, the 355-residue chain is Ataxin-3 (355 aa).

Methionine 1 participates in a covalent cross-link: Peptide (Met-Gly) (interchain with G-Cter in ubiquitin). One can recognise a Josephin domain in the interval methionine 1–methionine 180. The active-site Nucleophile is cysteine 14. The active-site Proton acceptor is histidine 119. Asparagine 134 is an active-site residue. Residue lysine 200 forms a Glycyl lysine isopeptide (Lys-Gly) (interchain with G-Cter in ubiquitin) linkage. 2 UIM domains span residues aspartate 224–glutamate 243 and aspartate 244–glycine 263. Positions methionine 257–valine 333 are disordered. Phosphoserine is present on residues serine 268, serine 272, and serine 273. The span at glutamate 279–arginine 301 shows a compositional bias: basic and acidic residues. Polar residues predominate over residues proline 312–asparagine 326. Serine 321 is subject to Phosphoserine. Positions serine 329–serine 348 constitute a UIM 3 domain.

In terms of assembly, interacts with STUB1/CHIP (when monoubiquitinated). Interacts with DNA repair proteins RAD23A and RAD23B. Interacts with BECN1 (via its poly-Gln domain). Interacts with PRKN, UBR2, VCP and tubulin. Monoubiquitinated by UBE2W, possibly leading to activate the deubiquitinating enzyme activity. As to expression, ubiquitously expressed.

It is found in the nucleus matrix. It localises to the nucleus. The protein resides in the lysosome membrane. The catalysed reaction is Thiol-dependent hydrolysis of ester, thioester, amide, peptide and isopeptide bonds formed by the C-terminal Gly of ubiquitin (a 76-residue protein attached to proteins as an intracellular targeting signal).. Deubiquitinating enzyme involved in protein homeostasis maintenance, transcription, cytoskeleton regulation, myogenesis and degradation of misfolded chaperone substrates. Binds long polyubiquitin chains and trims them, while it has weak or no activity against chains of 4 or less ubiquitins. Involved in degradation of misfolded chaperone substrates via its interaction with STUB1/CHIP: recruited to monoubiquitinated STUB1/CHIP, and restricts the length of ubiquitin chain attached to STUB1/CHIP substrates and preventing further chain extension. Interacts with key regulators of transcription and represses transcription: acts as a histone-binding protein that regulates transcription. Acts as a negative regulator of mTORC1 signaling in response to amino acid deprivation by mediating deubiquitination of RHEB, thereby promoting RHEB inactivation by the TSC-TBC complex. Regulates autophagy via the deubiquitination of 'Lys-402' of BECN1 leading to the stabilization of BECN1. The polypeptide is Ataxin-3 (Atxn3) (Rattus norvegicus (Rat)).